Here is a 90-residue protein sequence, read N- to C-terminus: C-C motif chemokine 4 homolog (90 aa).

A signal peptide spans 1–21; it reads MKVSVAALAVLLIAICYQTSA. 2 cysteine pairs are disulfide-bonded: C32–C56 and C33–C72.

The protein belongs to the intercrine beta (chemokine CC) family. Homodimer.

The protein resides in the secreted. Monokine with inflammatory and chemokinetic properties. In Gallus gallus (Chicken), this protein is C-C motif chemokine 4 homolog (CCL4).